The following is a 109-amino-acid chain: Putative double-stranded DNA mimic protein YciU (109 aa).

The protein belongs to the putative dsDNA mimic protein family.

Its function is as follows. May act as a double-stranded DNA (dsDNA) mimic. Probably regulates the activity of a dsDNA-binding protein. The chain is Putative double-stranded DNA mimic protein YciU from Salmonella paratyphi B (strain ATCC BAA-1250 / SPB7).